A 361-amino-acid chain; its full sequence is Ribosomal RNA large subunit methyltransferase M (361 aa).

Residues Ser-193, 226 to 229 (CPGG), Asp-245, Asp-265, and Asp-283 each bind S-adenosyl-L-methionine. The Proton acceptor role is filled by Lys-312.

The protein belongs to the class I-like SAM-binding methyltransferase superfamily. RNA methyltransferase RlmE family. RlmM subfamily. In terms of assembly, monomer.

Its subcellular location is the cytoplasm. The enzyme catalyses cytidine(2498) in 23S rRNA + S-adenosyl-L-methionine = 2'-O-methylcytidine(2498) in 23S rRNA + S-adenosyl-L-homocysteine + H(+). Its function is as follows. Catalyzes the 2'-O-methylation at nucleotide C2498 in 23S rRNA. In Histophilus somni (strain 2336) (Haemophilus somnus), this protein is Ribosomal RNA large subunit methyltransferase M.